Reading from the N-terminus, the 189-residue chain is Auxin-induced protein IAA4 (189 aa).

The EAR-like (transcriptional repression) signature appears at 8–12; the sequence is LRLGL. The region spanning 92-179 is the PB1 domain; it reads GIFVKVSMDG…SCKRLRIMKG (88 aa).

This sequence belongs to the Aux/IAA family. Homodimers and heterodimers. In terms of processing, phosphorylated by phytochrome A in vitro.

Its subcellular location is the nucleus. Aux/IAA proteins are short-lived transcriptional factors that function as repressors of early auxin response genes at low auxin concentrations. Repression is thought to result from the interaction with auxin response factors (ARFs), proteins that bind to the auxin-responsive promoter element (AuxRE). Formation of heterodimers with ARF proteins may alter their ability to modulate early auxin response genes expression. This chain is Auxin-induced protein IAA4 (IAA4/5), found in Pisum sativum (Garden pea).